We begin with the raw amino-acid sequence, 163 residues long: Transcription elongation factor GreA (163 aa).

The stretch at 49–80 forms a coiled coil; that stretch reads ENAEYDAARDRQSEVERRILELERILENAEII.

This sequence belongs to the GreA/GreB family.

In terms of biological role, necessary for efficient RNA polymerase transcription elongation past template-encoded arresting sites. The arresting sites in DNA have the property of trapping a certain fraction of elongating RNA polymerases that pass through, resulting in locked ternary complexes. Cleavage of the nascent transcript by cleavage factors such as GreA or GreB allows the resumption of elongation from the new 3'terminus. GreA releases sequences of 2 to 3 nucleotides. The protein is Transcription elongation factor GreA of Mycoplasmopsis agalactiae (strain NCTC 10123 / CIP 59.7 / PG2) (Mycoplasma agalactiae).